Reading from the N-terminus, the 181-residue chain is Oligoribonuclease (181 aa).

Residues 8–171 (LIWLDMEMTG…ADILESIEEM (164 aa)) form the Exonuclease domain. Tyrosine 129 is an active-site residue.

This sequence belongs to the oligoribonuclease family.

The protein localises to the cytoplasm. Its function is as follows. 3'-to-5' exoribonuclease specific for small oligoribonucleotides. This Chromobacterium violaceum (strain ATCC 12472 / DSM 30191 / JCM 1249 / CCUG 213 / NBRC 12614 / NCIMB 9131 / NCTC 9757 / MK) protein is Oligoribonuclease.